The chain runs to 185 residues: Ribosome-recycling factor (185 aa).

The protein belongs to the RRF family.

The protein localises to the cytoplasm. Responsible for the release of ribosomes from messenger RNA at the termination of protein biosynthesis. May increase the efficiency of translation by recycling ribosomes from one round of translation to another. In Vibrio campbellii (strain ATCC BAA-1116), this protein is Ribosome-recycling factor.